The chain runs to 195 residues: MSIRVGQKAPDFTATAVFDQEFGTIRLSDYLDKRYVVLFFYPLDFTFVCPTEITAFSDRFKEFKELSTEVLGVSVDSEFSHLAWTQIDRKSGGLGELEYPLVSDLKKEISSSYNVLTEDGVALRALFIIDKEGIIQHSTVNNLSFGRNVDEALRTLQAIQYSQENPDEVCPVNWKPGSKTMKPDPVGSKVYFEAI.

One can recognise a Thioredoxin domain in the interval 3 to 161; it reads IRVGQKAPDF…ALRTLQAIQY (159 aa). The active-site Cysteine sulfenic acid (-SOH) intermediate is cysteine 49.

It belongs to the peroxiredoxin family. AhpC/Prx1 subfamily. As to quaternary structure, homodimer; disulfide-linked, upon oxidation.

It localises to the plastid. The protein localises to the chloroplast. It catalyses the reaction a hydroperoxide + [thioredoxin]-dithiol = an alcohol + [thioredoxin]-disulfide + H2O. Thiol-specific peroxidase that catalyzes the reduction of hydrogen peroxide and organic hydroperoxides to water and alcohols, respectively. Plays a role in cell protection against oxidative stress by detoxifying peroxides. The chain is 2-cysteine peroxiredoxin, chloroplastic from Chattonella marina var. antiqua (Red tide flagellate).